A 297-amino-acid polypeptide reads, in one-letter code: Signal-transducing adaptor protein 1 (297 aa).

A PH domain is found at Pro-25–Glu-121. Tyr-170 bears the Phosphotyrosine mark. The region spanning Glu-179 to Ala-273 is the SH2 domain. The tract at residues His-271–Ala-297 is disordered.

In terms of assembly, interacts with URI1; the interaction is phosphorylation-dependent occurs in a growth-dependent manner. Interacts with KIT and CSF1R. Phosphorylated on tyrosine by TEC. Phosphorylated on tyrosine by KIT. As to expression, expression restricted to the bone marrow.

The protein resides in the nucleus. It localises to the cytoplasm. Its subcellular location is the mitochondrion. May function as an adapter molecule downstream of KIT in the proliferation or differentiation of hematopoietic stem cells. This chain is Signal-transducing adaptor protein 1 (Stap1), found in Mus musculus (Mouse).